We begin with the raw amino-acid sequence, 668 residues long: tRNA 5-methylaminomethyl-2-thiouridine biosynthesis bifunctional protein MnmC (668 aa).

A tRNA (mnm(5)s(2)U34)-methyltransferase region spans residues 1-245 (MKHYSIQPAN…KREMLCGVME (245 aa)). Positions 270–668 (IGGGIACALL…LLKGKAVKAG (399 aa)) are FAD-dependent cmnm(5)s(2)U34 oxidoreductase.

In the N-terminal section; belongs to the methyltransferase superfamily. tRNA (mnm(5)s(2)U34)-methyltransferase family. The protein in the C-terminal section; belongs to the DAO family. It depends on FAD as a cofactor.

The protein localises to the cytoplasm. The catalysed reaction is 5-aminomethyl-2-thiouridine(34) in tRNA + S-adenosyl-L-methionine = 5-methylaminomethyl-2-thiouridine(34) in tRNA + S-adenosyl-L-homocysteine + H(+). In terms of biological role, catalyzes the last two steps in the biosynthesis of 5-methylaminomethyl-2-thiouridine (mnm(5)s(2)U) at the wobble position (U34) in tRNA. Catalyzes the FAD-dependent demodification of cmnm(5)s(2)U34 to nm(5)s(2)U34, followed by the transfer of a methyl group from S-adenosyl-L-methionine to nm(5)s(2)U34, to form mnm(5)s(2)U34. The protein is tRNA 5-methylaminomethyl-2-thiouridine biosynthesis bifunctional protein MnmC of Shigella boydii serotype 4 (strain Sb227).